The chain runs to 774 residues: Pentatricopeptide repeat-containing protein At4g20770 (774 aa).

PPR repeat units lie at residues 5-39 (GNKY…GMKS), 40-70 (DTYL…MSVR), 71-101 (DVYS…MPER), 102-136 (DVVS…GFLP), 137-171 (SRFT…GLDK), 172-203 (NIFV…LSQP), 204-238 (NEVS…GVQV), 239-270 (DSVC…LGKQ), 283-313 (DLHL…MPEV), 314-348 (NVVS…GFQP), 349-379 (NEVT…IPQP), 380-414 (SVSA…NLKP), 415-449 (DKTT…EISK), 450-480 (NSHI…CINE), 482-516 (DIAC…AVLC), 518-552 (NETS…GYVS), 553-583 (DSFV…VLRK), 584-618 (NTVI…GEKP), 619-654 (DGIT…GIEP), and 655-685 (ELDH…TPYK). A type E motif region spans residues 690-765 (LWEILLSSCR…TPGQSWTTYG (76 aa)).

This sequence belongs to the PPR family. PCMP-E subfamily.

The protein is Pentatricopeptide repeat-containing protein At4g20770 (PCMP-E35) of Arabidopsis thaliana (Mouse-ear cress).